Here is a 128-residue protein sequence, read N- to C-terminus: L-ectoine synthase (128 aa).

Belongs to the ectoine synthase family.

The enzyme catalyses (2S)-4-acetamido-2-aminobutanoate = L-ectoine + H2O. Its pathway is amine and polyamine biosynthesis; ectoine biosynthesis; L-ectoine from L-aspartate 4-semialdehyde: step 3/3. Catalyzes the circularization of gamma-N-acetyl-alpha,gamma-diaminobutyric acid (ADABA) to ectoine (1,4,5,6-tetrahydro-2-methyl-4-pyrimidine carboxylic acid), which is an excellent osmoprotectant. This is L-ectoine synthase from Aliivibrio fischeri (strain ATCC 700601 / ES114) (Vibrio fischeri).